The primary structure comprises 243 residues: Adapter protein MecA (243 aa).

The tract at residues 119 to 140 is disordered; sequence NQVEDGQGIAHNPTKDTNDLDP.

Belongs to the MecA family. In terms of assembly, homodimer.

Its function is as follows. Enables the recognition and targeting of unfolded and aggregated proteins to the ClpC protease or to other proteins involved in proteolysis. This is Adapter protein MecA from Lactiplantibacillus plantarum (strain ATCC BAA-793 / NCIMB 8826 / WCFS1) (Lactobacillus plantarum).